Reading from the N-terminus, the 180-residue chain is Endoribonuclease YbeY (180 aa).

3 residues coordinate Zn(2+): histidine 149, histidine 153, and histidine 159.

It belongs to the endoribonuclease YbeY family. Zn(2+) is required as a cofactor.

The protein localises to the cytoplasm. Single strand-specific metallo-endoribonuclease involved in late-stage 70S ribosome quality control and in maturation of the 3' terminus of the 16S rRNA. This Prochlorococcus marinus (strain MIT 9515) protein is Endoribonuclease YbeY.